A 434-amino-acid chain; its full sequence is Adenylosuccinate synthetase (434 aa).

Residues 22 to 28 (GDEGKGK) and 50 to 52 (GHT) each bind GTP. Residue Asp23 is the Proton acceptor of the active site. 2 residues coordinate Mg(2+): Asp23 and Gly50. IMP contacts are provided by residues 23-26 (DEGK), 48-51 (NAGH), Thr139, Arg153, Gln234, Thr249, and Arg313. The active-site Proton donor is His51. 309-315 (ATTGRKR) is a substrate binding site. Residues Arg315, 341 to 343 (KLD), and 423 to 425 (SVG) contribute to the GTP site.

The protein belongs to the adenylosuccinate synthetase family. Homodimer. It depends on Mg(2+) as a cofactor.

Its subcellular location is the cytoplasm. It catalyses the reaction IMP + L-aspartate + GTP = N(6)-(1,2-dicarboxyethyl)-AMP + GDP + phosphate + 2 H(+). The protein operates within purine metabolism; AMP biosynthesis via de novo pathway; AMP from IMP: step 1/2. Functionally, plays an important role in the de novo pathway of purine nucleotide biosynthesis. Catalyzes the first committed step in the biosynthesis of AMP from IMP. The protein is Adenylosuccinate synthetase of Pelodictyon phaeoclathratiforme (strain DSM 5477 / BU-1).